A 309-amino-acid polypeptide reads, in one-letter code: Porphobilinogen deaminase (309 aa).

An S-(dipyrrolylmethanemethyl)cysteine modification is found at Cys244.

Belongs to the HMBS family. As to quaternary structure, monomer. It depends on dipyrromethane as a cofactor.

It catalyses the reaction 4 porphobilinogen + H2O = hydroxymethylbilane + 4 NH4(+). It functions in the pathway porphyrin-containing compound metabolism; protoporphyrin-IX biosynthesis; coproporphyrinogen-III from 5-aminolevulinate: step 2/4. Its function is as follows. Tetrapolymerization of the monopyrrole PBG into the hydroxymethylbilane pre-uroporphyrinogen in several discrete steps. The sequence is that of Porphobilinogen deaminase from Listeria monocytogenes serotype 4b (strain CLIP80459).